The sequence spans 235 residues: Small ribosomal subunit protein uS2c (235 aa).

Belongs to the universal ribosomal protein uS2 family.

Its subcellular location is the plastid. It is found in the chloroplast. The chain is Small ribosomal subunit protein uS2c (rps2) from Cryptomeria japonica (Japanese cedar).